A 683-amino-acid polypeptide reads, in one-letter code: Transcription factor SFP1 (683 aa).

Disordered regions lie at residues 156 to 178 (ATNT…PYHR), 305 to 324 (DSNS…NIIQ), 332 to 357 (VNHT…TANP), 399 to 420 (SNSP…NSGI), 498 to 517 (HNSM…YNTF), and 535 to 573 (IDDI…NNYK). Polar residues predominate over residues 160-173 (LQIQQPTKRPSVSN). A prion domain (PrD) region spans residues 230–458 (NTTNMSQIPM…NYSLNKTSRN (229 aa)). Over residues 535–557 (IDDIDDDDDVDDDDDDDDDDDTE) the composition is skewed to acidic residues. Residues 558–573 (NGSSSNGKSVHNNNYK) show a composition bias toward polar residues. 2 consecutive C2H2-type zinc fingers follow at residues 598–623 (FKCP…LHGH) and 659–683 (YRCE…HSTH).

Interacts with the target of rapamycin complex 1 (TORC1) in a rapamycin-dependent manner. Interacts with MRS6. In terms of processing, phosphorylated by TORC1 kinase at multiple sites. Phosphorylation regulates nuclear localization and RP promoter binding.

The protein resides in the cytoplasm. Its subcellular location is the nucleus. In terms of biological role, transcription factor that regulates ribosomal protein (RP) and ribosome biogenesis (Ribi) gene expression in response to nutrients and stress. Promotes RP gene expression under optimal growth conditions. Leaves the nucleus upon environmental challenges, resulting in a down-regulation of RP gene transcription. The effect of the environmental cues on SFP1 localization is mediated through the TOR pathway. Also regulates the expression of genes involved in the G2/M transition during the mitotic cell cycle and the DNA-damage response. Required for carbon-source modulation of cell size. The chain is Transcription factor SFP1 (SFP1) from Saccharomyces cerevisiae (strain ATCC 204508 / S288c) (Baker's yeast).